Reading from the N-terminus, the 86-residue chain is U15-lycotoxin-Ls1g (86 aa).

The N-terminal stretch at M1–S20 is a signal peptide. Positions D21–A66 constitute a WAP domain. Disulfide bonds link C24–C54, C32–C58, C41–C53, C42–C80, and C47–C62.

It belongs to the venom protein 11 family. 01 (wap-1) subfamily. Contains 5 disulfide bonds. As to expression, expressed by the venom gland.

It localises to the secreted. Functionally, has antibacterial activity. This is U15-lycotoxin-Ls1g from Lycosa singoriensis (Wolf spider).